Consider the following 296-residue polypeptide: Bifunctional protein FolD 1/3 (296 aa).

NADP(+) contacts are provided by residues 166 to 168 (GRS), S191, and I232.

This sequence belongs to the tetrahydrofolate dehydrogenase/cyclohydrolase family. Homodimer.

It carries out the reaction (6R)-5,10-methylene-5,6,7,8-tetrahydrofolate + NADP(+) = (6R)-5,10-methenyltetrahydrofolate + NADPH. The catalysed reaction is (6R)-5,10-methenyltetrahydrofolate + H2O = (6R)-10-formyltetrahydrofolate + H(+). Its pathway is one-carbon metabolism; tetrahydrofolate interconversion. Catalyzes the oxidation of 5,10-methylenetetrahydrofolate to 5,10-methenyltetrahydrofolate and then the hydrolysis of 5,10-methenyltetrahydrofolate to 10-formyltetrahydrofolate. The polypeptide is Bifunctional protein FolD 1/3 (Ruegeria pomeroyi (strain ATCC 700808 / DSM 15171 / DSS-3) (Silicibacter pomeroyi)).